We begin with the raw amino-acid sequence, 507 residues long: Cytochrome P450 monooxygenase nodZ (507 aa).

A run of 2 helical transmembrane segments spans residues 1-21 (MITA…FSLL) and 205-225 (GFLH…PWFL). N352 carries an N-linked (GlcNAc...) asparagine glycan. C445 is a heme binding site.

This sequence belongs to the cytochrome P450 family. Heme is required as a cofactor.

Its subcellular location is the membrane. Its pathway is secondary metabolite biosynthesis. Its function is as follows. Cytochrome P450 monooxygenase; part of the gene cluster that mediates the biosynthesis of the indole diterpenes nodulisporic acids (NA). Nodulisporic acid A (NAA) and its chemically modified derivatives are of particular significance because of their highly potent insecticidal activity against blood-feeding arthropods and lack of observable adverse effects on mammals, in particular the tremogenicity associated with the paspaline-derived IDTs is not observed. The geranylgeranyl diphosphate (GGPP) synthase ggs1, localized outside of the cluster, is proposed to catalyze the first step in nodulisporic acid biosynthesis via conversion of farnesyl pyrophosphate and isopentyl pyrophosphate into geranylgeranyl pyrophosphate (GGPP). Condensation of indole-3-glycerol phosphate with GGPP by the prenyl transferase nodC then forms 3-geranylgeranylindole (3-GGI). Epoxidation by the FAD-dependent monooxygenase nodM leads to a single-epoxidized-GGI that is substrate of the terpene cyclase nodB for cyclization to yield emindole SB. The terminal methyl carbon, C28, of emindole SB is then oxidized by the cytochrome P450 monooxygenase nodW to produce nodulisporic acid F (NAF), the pentacyclic core of NAA. NAF is converted to nodulisporic acid E (NAE) via prenylation. This step is probably performed by one of the indole diterpene prenyltransferases nodD1 or nodD2. Several oxidation steps performed by the FAD-linked oxidoreductase nodO and one of the cytochrome P450 monooxygenase nodR, nodX or nodZ further convert NAE to nodulisporic acid D (NAD). NAD is substrate of cytochrome P450 monooxygenase nodJ to produce the precursor of nodulisporic acid C (NAC), converted to NAC by one of the indole diterpene prenyltransferases nodD1 or nodD2. The FAD-dependent monooxygenase nodY2 then oxidizes NAC to nodulisporic acid B (NAB). Finally NAB is converted to NAA by one of the cytochrome P450 monooxygenases nodR, nodX or nodZ. The protein is Cytochrome P450 monooxygenase nodZ of Hypoxylon pulicicidum.